The following is a 595-amino-acid chain: Chaperone protein HscA homolog (595 aa).

The protein belongs to the heat shock protein 70 family.

Its function is as follows. Chaperone involved in the maturation of iron-sulfur cluster-containing proteins. Has a low intrinsic ATPase activity which is markedly stimulated by HscB. The sequence is that of Chaperone protein HscA homolog from Rickettsia africae (strain ESF-5).